Consider the following 249-residue polypeptide: Small ribosomal subunit protein eS6 (249 aa).

Disordered regions lie at residues 161–181 and 194–249; these read PLAK…RLVT and LKKQ…SSQK. The span at 216–229 shows a compositional bias: basic and acidic residues; that stretch reads RSKEAKEKRQEQIA. 5 positions are modified to phosphoserine: serine 235, serine 236, serine 240, serine 244, and serine 247. The span at 236–249 shows a compositional bias: low complexity; it reads SLRASTSKSESSQK.

It belongs to the eukaryotic ribosomal protein eS6 family. In terms of assembly, component of the small ribosomal subunit. Part of the small subunit (SSU) processome, composed of more than 70 proteins and the RNA chaperone small nucleolar RNA (snoRNA) U3. In terms of processing, ribosomal protein S6 is the major substrate of protein kinases in eukaryote ribosomes. The phosphorylation is stimulated by growth factors, tumor promoting agents, and mitogens. It is dephosphorylated at growth arrest.

It localises to the cytoplasm. The protein resides in the nucleus. It is found in the nucleolus. In terms of biological role, component of the 40S small ribosomal subunit. Plays an important role in controlling cell growth and proliferation through the selective translation of particular classes of mRNA. Part of the small subunit (SSU) processome, first precursor of the small eukaryotic ribosomal subunit. During the assembly of the SSU processome in the nucleolus, many ribosome biogenesis factors, an RNA chaperone and ribosomal proteins associate with the nascent pre-rRNA and work in concert to generate RNA folding, modifications, rearrangements and cleavage as well as targeted degradation of pre-ribosomal RNA by the RNA exosome. The chain is Small ribosomal subunit protein eS6 (rps6) from Xenopus laevis (African clawed frog).